The primary structure comprises 690 residues: DNA ligase (690 aa).

NAD(+)-binding positions include 36-40 (DSVYD), 85-86 (SL), and glutamate 124. Lysine 126 acts as the N6-AMP-lysine intermediate in catalysis. 4 residues coordinate NAD(+): arginine 147, glutamate 184, lysine 308, and lysine 332. Positions 426, 429, 444, and 449 each coordinate Zn(2+). In terms of domain architecture, BRCT spans 614 to 690 (NQSNVFDGKS…INENELKLLL (77 aa)).

It belongs to the NAD-dependent DNA ligase family. LigA subfamily. Requires Mg(2+) as cofactor. Mn(2+) serves as cofactor.

The catalysed reaction is NAD(+) + (deoxyribonucleotide)n-3'-hydroxyl + 5'-phospho-(deoxyribonucleotide)m = (deoxyribonucleotide)n+m + AMP + beta-nicotinamide D-nucleotide.. In terms of biological role, DNA ligase that catalyzes the formation of phosphodiester linkages between 5'-phosphoryl and 3'-hydroxyl groups in double-stranded DNA using NAD as a coenzyme and as the energy source for the reaction. It is essential for DNA replication and repair of damaged DNA. This Prochlorococcus marinus (strain NATL2A) protein is DNA ligase.